A 236-amino-acid chain; its full sequence is UPF0173 metal-dependent hydrolase DSY1309 (236 aa).

The protein belongs to the UPF0173 family.

This is UPF0173 metal-dependent hydrolase DSY1309 from Desulfitobacterium hafniense (strain Y51).